We begin with the raw amino-acid sequence, 144 residues long: UPF0292 protein MA_4098 (144 aa).

Residues 28-109 (GAVIIVEGKR…KPELQIRNKL (82 aa)) form the Toprim domain. Mg(2+) contacts are provided by Glu-34, Asp-78, and Asp-80.

Belongs to the UPF0292 family. Requires Mg(2+) as cofactor.

The polypeptide is UPF0292 protein MA_4098 (Methanosarcina acetivorans (strain ATCC 35395 / DSM 2834 / JCM 12185 / C2A)).